A 195-amino-acid chain; its full sequence is Probable GTP-binding protein EngB (195 aa).

Positions 22–195 constitute an EngB-type G domain; it reads GRPEVALAGR…WAALLPFVAS (174 aa). GTP is bound by residues 30–37, 57–61, 75–78, 142–145, and 174–176; these read GRSNVGKS, GKTQT, DVPG, TKAD, and FSA. Mg(2+)-binding residues include Ser-37 and Thr-59.

This sequence belongs to the TRAFAC class TrmE-Era-EngA-EngB-Septin-like GTPase superfamily. EngB GTPase family. Requires Mg(2+) as cofactor.

In terms of biological role, necessary for normal cell division and for the maintenance of normal septation. This chain is Probable GTP-binding protein EngB, found in Geobacillus kaustophilus (strain HTA426).